Here is a 102-residue protein sequence, read N- to C-terminus: Large ribosomal subunit protein uL24 (102 aa).

The protein belongs to the universal ribosomal protein uL24 family. Part of the 50S ribosomal subunit.

Functionally, one of two assembly initiator proteins, it binds directly to the 5'-end of the 23S rRNA, where it nucleates assembly of the 50S subunit. Its function is as follows. One of the proteins that surrounds the polypeptide exit tunnel on the outside of the subunit. The polypeptide is Large ribosomal subunit protein uL24 (Allorhizobium ampelinum (strain ATCC BAA-846 / DSM 112012 / S4) (Agrobacterium vitis (strain S4))).